The chain runs to 644 residues: 1,4-alpha-glucan branching enzyme GlgB (644 aa).

The active-site Nucleophile is the aspartate 309. Glutamate 362 serves as the catalytic Proton donor.

Belongs to the glycosyl hydrolase 13 family. GlgB subfamily. In terms of assembly, monomer.

It catalyses the reaction Transfers a segment of a (1-&gt;4)-alpha-D-glucan chain to a primary hydroxy group in a similar glucan chain.. It participates in glycan biosynthesis; glycogen biosynthesis. Functionally, catalyzes the formation of the alpha-1,6-glucosidic linkages in glycogen by scission of a 1,4-alpha-linked oligosaccharide from growing alpha-1,4-glucan chains and the subsequent attachment of the oligosaccharide to the alpha-1,6 position. The chain is 1,4-alpha-glucan branching enzyme GlgB from Cutibacterium acnes (strain DSM 16379 / KPA171202) (Propionibacterium acnes).